The following is a 209-amino-acid chain: Uracil phosphoribosyltransferase (209 aa).

5-phospho-alpha-D-ribose 1-diphosphate is bound by residues Arg79, Arg104, and Asp131–Ser139. Uracil contacts are provided by residues Ile194 and Gly199–Ala201. Residue Asp200 participates in 5-phospho-alpha-D-ribose 1-diphosphate binding.

The protein belongs to the UPRTase family. Mg(2+) is required as a cofactor.

The catalysed reaction is UMP + diphosphate = 5-phospho-alpha-D-ribose 1-diphosphate + uracil. Its pathway is pyrimidine metabolism; UMP biosynthesis via salvage pathway; UMP from uracil: step 1/1. Its activity is regulated as follows. Allosterically activated by GTP. In terms of biological role, catalyzes the conversion of uracil and 5-phospho-alpha-D-ribose 1-diphosphate (PRPP) to UMP and diphosphate. This is Uracil phosphoribosyltransferase from Geobacter sp. (strain M21).